The chain runs to 428 residues: 3-phosphoshikimate 1-carboxyvinyltransferase (428 aa).

Residues K21, S22, and R26 each contribute to the 3-phosphoshikimate site. Residue K21 participates in phosphoenolpyruvate binding. The phosphoenolpyruvate site is built by G93 and R121. S166, Q168, D314, and K341 together coordinate 3-phosphoshikimate. Q168 lines the phosphoenolpyruvate pocket. Catalysis depends on D314, which acts as the Proton acceptor. Phosphoenolpyruvate is bound by residues R345 and R388.

Belongs to the EPSP synthase family. In terms of assembly, monomer.

It is found in the cytoplasm. The enzyme catalyses 3-phosphoshikimate + phosphoenolpyruvate = 5-O-(1-carboxyvinyl)-3-phosphoshikimate + phosphate. Its pathway is metabolic intermediate biosynthesis; chorismate biosynthesis; chorismate from D-erythrose 4-phosphate and phosphoenolpyruvate: step 6/7. Its function is as follows. Catalyzes the transfer of the enolpyruvyl moiety of phosphoenolpyruvate (PEP) to the 5-hydroxyl of shikimate-3-phosphate (S3P) to produce enolpyruvyl shikimate-3-phosphate and inorganic phosphate. In Syntrophomonas wolfei subsp. wolfei (strain DSM 2245B / Goettingen), this protein is 3-phosphoshikimate 1-carboxyvinyltransferase.